A 525-amino-acid polypeptide reads, in one-letter code: GMP synthase [glutamine-hydrolyzing] (525 aa).

In terms of domain architecture, Glutamine amidotransferase type-1 spans 8 to 207 (KILILDFGSQ…AVAICGCGTN (200 aa)). The Nucleophile role is filled by C85. Active-site residues include H181 and E183. In terms of domain architecture, GMPS ATP-PPase spans 208–400 (WKPSSIIEDA…LGLPYNMLYR (193 aa)). 235-241 (SGGVDSS) serves as a coordination point for ATP.

Homodimer.

The enzyme catalyses XMP + L-glutamine + ATP + H2O = GMP + L-glutamate + AMP + diphosphate + 2 H(+). It participates in purine metabolism; GMP biosynthesis; GMP from XMP (L-Gln route): step 1/1. In terms of biological role, catalyzes the synthesis of GMP from XMP. This chain is GMP synthase [glutamine-hydrolyzing], found in Shewanella denitrificans (strain OS217 / ATCC BAA-1090 / DSM 15013).